Consider the following 1357-residue polypeptide: DNA-directed RNA polymerase subunit beta (1357 aa).

This sequence belongs to the RNA polymerase beta chain family. As to quaternary structure, the RNAP catalytic core consists of 2 alpha, 1 beta, 1 beta' and 1 omega subunit. When a sigma factor is associated with the core the holoenzyme is formed, which can initiate transcription.

It carries out the reaction RNA(n) + a ribonucleoside 5'-triphosphate = RNA(n+1) + diphosphate. In terms of biological role, DNA-dependent RNA polymerase catalyzes the transcription of DNA into RNA using the four ribonucleoside triphosphates as substrates. This is DNA-directed RNA polymerase subunit beta from Ectopseudomonas mendocina (strain ymp) (Pseudomonas mendocina).